A 205-amino-acid chain; its full sequence is Holliday junction branch migration complex subunit RuvA (205 aa).

The domain I stretch occupies residues 1 to 64 (MIAHLRGELV…EDALTLYGFL (64 aa)). The domain II stretch occupies residues 65 to 143 (TQAEYDLFEL…AVPAGGGGVP (79 aa)). Residues 144–153 (DGLPVAVAPA) form a flexible linker region. Positions 153–205 (AGDAWAEASEALIALGYSRGEAAAALARVRAEAGEAPSVETLVRLALKQLYRG) are domain III.

The protein belongs to the RuvA family. As to quaternary structure, homotetramer. Forms an RuvA(8)-RuvB(12)-Holliday junction (HJ) complex. HJ DNA is sandwiched between 2 RuvA tetramers; dsDNA enters through RuvA and exits via RuvB. An RuvB hexamer assembles on each DNA strand where it exits the tetramer. Each RuvB hexamer is contacted by two RuvA subunits (via domain III) on 2 adjacent RuvB subunits; this complex drives branch migration. In the full resolvosome a probable DNA-RuvA(4)-RuvB(12)-RuvC(2) complex forms which resolves the HJ.

It localises to the cytoplasm. In terms of biological role, the RuvA-RuvB-RuvC complex processes Holliday junction (HJ) DNA during genetic recombination and DNA repair, while the RuvA-RuvB complex plays an important role in the rescue of blocked DNA replication forks via replication fork reversal (RFR). RuvA specifically binds to HJ cruciform DNA, conferring on it an open structure. The RuvB hexamer acts as an ATP-dependent pump, pulling dsDNA into and through the RuvAB complex. HJ branch migration allows RuvC to scan DNA until it finds its consensus sequence, where it cleaves and resolves the cruciform DNA. This chain is Holliday junction branch migration complex subunit RuvA, found in Symbiobacterium thermophilum (strain DSM 24528 / JCM 14929 / IAM 14863 / T).